Reading from the N-terminus, the 124-residue chain is 14 kDa phosphohistidine phosphatase (124 aa).

K20 lines the substrate pocket. The active-site Proton acceptor is the H52. Residue 93 to 95 (SMG) participates in substrate binding.

It belongs to the janus family. As to quaternary structure, monomer.

It localises to the cytoplasm. It carries out the reaction N(pros)-phospho-L-histidyl-[protein] + H2O = L-histidyl-[protein] + phosphate. It catalyses the reaction N(tele)-phospho-L-histidyl-[protein] + H2O = L-histidyl-[protein] + phosphate. Its function is as follows. Exhibits phosphohistidine phosphatase activity. This is 14 kDa phosphohistidine phosphatase (Phpt1) from Mus musculus (Mouse).